The sequence spans 71 residues: Venom peptide 2-long (71 aa).

Positions 1–24 (MKQSIIIALFATIAVMACLQMVAA) are cleaved as a signal peptide. AXPX repeat units follow at residues 24–27 (AVPA), 32–35 (AAPG), 44–47 (ASPE), 50–53 (ASPE), and 54–57 (AEPI). Residues 25–54 (VPAPVPEAAPGPVAEAEAYASPEALASPEA) constitute a propeptide that is removed on maturation. Leucine 68 carries the post-translational modification Leucine amide.

It belongs to the MCD family. Protonectin subfamily. As to expression, expressed by the venom gland.

The protein resides in the secreted. It localises to the target cell membrane. Antimicrobial peptide with strong activity against the fungus B.cinerea (MIC=0.5 ug/ml), and poor activities against the fungus C.albicans (MIC=100 ug/ml), the Gram-positive bacterium S.aureus (MIC=125 ug/ml) and the Gram-negative bacterium E.coli (MIC=125 ug/ml). In terms of biological role, antimicrobial peptide with strong activity against the fungus B.cinerea (MIC=0.4 uM), and poor activities against the fungus C.albicans (MIC=16 uM), the Gram-positive bacterium S.aureus (MIC=20 uM) and the Gram-negative bacterium E.coli (MIC=79 uM). Shows cytolytic activity against insect cell lines. Has potent hemolytic activity against ovine erythrocytes. Has potent hemolytic activity against human erythrocytes (EC(50)=31 uM). In vivo, peptide injection in the vicinity of the head and thorax of lepidopteran larvae induces feeding disorder followed by death due to starvation. This is Venom peptide 2-long from Orancistrocerus drewseni (Solitary wasp).